A 400-amino-acid polypeptide reads, in one-letter code: Axin-like protein 1 (400 aa).

The 129-residue stretch at 4 to 132 (RSKFSIDRVL…TTTADVNTTW (129 aa)) folds into the RGS domain. 2 disordered regions span residues 190–233 (QETK…TLKV) and 278–306 (GTLE…GSEA). Residues 194–210 (NSSETEEHAESPRKEKS) show a composition bias toward basic and acidic residues. A compositionally biased stretch (polar residues) spans 287-298 (FTGTNNGFSTLQ). One can recognise a DIX domain in the interval 305–392 (EAPKMTVELR…RITAICRMCP (88 aa)).

As to quaternary structure, interacts with bar-1, dsh-2, gsk-3, and mig-5.

In terms of biological role, works in parallel with pry-1 in negatively regulating bar-1 signaling in vulval precursor cells and Q neuroblasts. Shown to have a role in excretory cell development. This is Axin-like protein 1 from Caenorhabditis elegans.